Reading from the N-terminus, the 397-residue chain is Arginine biosynthesis bifunctional protein ArgJ (397 aa).

Positions 143, 169, 180, 266, 392, and 397 each coordinate substrate. Thr180 (nucleophile) is an active-site residue.

This sequence belongs to the ArgJ family. In terms of assembly, heterotetramer of two alpha and two beta chains.

The protein resides in the cytoplasm. It catalyses the reaction N(2)-acetyl-L-ornithine + L-glutamate = N-acetyl-L-glutamate + L-ornithine. The enzyme catalyses L-glutamate + acetyl-CoA = N-acetyl-L-glutamate + CoA + H(+). The protein operates within amino-acid biosynthesis; L-arginine biosynthesis; L-ornithine and N-acetyl-L-glutamate from L-glutamate and N(2)-acetyl-L-ornithine (cyclic): step 1/1. It functions in the pathway amino-acid biosynthesis; L-arginine biosynthesis; N(2)-acetyl-L-ornithine from L-glutamate: step 1/4. With respect to regulation, competitively inhibited by L-ornithine. Catalyzes two activities which are involved in the cyclic version of arginine biosynthesis: the synthesis of N-acetylglutamate from glutamate and acetyl-CoA as the acetyl donor, and of ornithine by transacetylation between N(2)-acetylornithine and glutamate. This Thermotoga neapolitana (strain ATCC 49049 / DSM 4359 / NBRC 107923 / NS-E) protein is Arginine biosynthesis bifunctional protein ArgJ.